The following is a 142-amino-acid chain: Probable transport accessory protein MmpS1 (142 aa).

The next 2 membrane-spanning stretches (helical) occupy residues 8 to 28 (FWIP…VSRL) and 81 to 101 (VVNA…AVVA).

Belongs to the MmpS family.

It localises to the cell membrane. This chain is Probable transport accessory protein MmpS1 (mmpS1), found in Mycobacterium bovis (strain ATCC BAA-935 / AF2122/97).